Here is a 204-residue protein sequence, read N- to C-terminus: CASP-like protein 3A1 (204 aa).

Topologically, residues 1–39 (MGSIGNGRNGSEVGIQIPAMGNKEVLERPAIPRWPRLGV) are cytoplasmic. The helical transmembrane segment at 40 to 60 (VMVATRAVALVMAVLSMALMI) threads the bilayer. Over 61-88 (SAKQRGSLKIFGIEIPLYANWSFSDSLE) the chain is Extracellular. Residue Asn80 is glycosylated (N-linked (GlcNAc...) asparagine). Residues 89–109 (YLVGMSAVSAAYCLAQLLLTA) traverse the membrane as a helical segment. Residues 110-124 (HKAVKNAPVVQSRNY) are Cytoplasmic-facing. The helical transmembrane segment at 125–145 (AWLLFTGDQIFAYAMMSAGSA) threads the bilayer. Topologically, residues 146–179 (AAAVANLNRTGIRHTALPNFCKPLPRFCDLSAAS) are extracellular. The N-linked (GlcNAc...) asparagine glycan is linked to Asn153. Residues 180-200 (IACAFLSCIFLAASAVIDVIW) traverse the membrane as a helical segment. The Cytoplasmic portion of the chain corresponds to 201–204 (LSNM).

This sequence belongs to the Casparian strip membrane proteins (CASP) family. Homodimer and heterodimers.

It localises to the cell membrane. The chain is CASP-like protein 3A1 from Oryza sativa subsp. indica (Rice).